The following is a 219-amino-acid chain: Probable lipoprotein YiaD (219 aa).

The N-terminal stretch at 1-20 is a signal peptide; sequence MKKRVYLIAAVVSGALAVSG. Cysteine 21 carries N-palmitoyl cysteine lipidation. Cysteine 21 carries S-diacylglycerol cysteine lipidation. Helical transmembrane passes span 37-55 and 62-84; these read IGAGLGSLVGAGIGALSSS and GALIGAAAGAALGGGVGYYMDVQ. Positions 103 to 219 constitute an OmpA-like domain; it reads GDNIILNMPN…RRVEITLSPL (117 aa).

Its subcellular location is the cell inner membrane. It localises to the cell outer membrane. Its function is as follows. Suppresses temperature-sensitive mutations in BamB when overexpressed. The protein is Probable lipoprotein YiaD (yiaD) of Escherichia coli (strain K12).